Consider the following 461-residue polypeptide: Argininosuccinate lyase (461 aa).

This sequence belongs to the lyase 1 family. Argininosuccinate lyase subfamily.

The protein resides in the cytoplasm. It catalyses the reaction 2-(N(omega)-L-arginino)succinate = fumarate + L-arginine. The protein operates within amino-acid biosynthesis; L-arginine biosynthesis; L-arginine from L-ornithine and carbamoyl phosphate: step 3/3. The chain is Argininosuccinate lyase from Trichormus variabilis (strain ATCC 29413 / PCC 7937) (Anabaena variabilis).